Reading from the N-terminus, the 702-residue chain is Zinc finger CCCH domain-containing protein 62 (702 aa).

Residues 1-77 (MAAPAADDDD…SYDDPTFDPA (77 aa)) are disordered. The span at 18–54 (EEDDGEEEEGSEEEVESDDEEEEEGEGYDWSEEDDPE) shows a compositional bias: acidic residues. The 35-residue stretch at 132-166 (LEKLKVYECKAYLRMHKLRLSGNKEVLLTRIRGQI) folds into the SAP domain. Disordered regions lie at residues 288 to 349 (EKHA…NTVQ), 405 to 532 (SRTS…QQQP), 546 to 602 (GGTS…RETH), and 634 to 673 (QMSQ…NPQR). The span at 298–325 (KTREVRIKDKENERMRRLNRNKENKSKG) shows a compositional bias: basic and acidic residues. Polar residues-rich tracts occupy residues 326-349 (QDNM…NTVQ) and 405-419 (SRTS…QAPS). The span at 430 to 448 (QQQQQQQPPKSIKPAPIQQ) shows a compositional bias: low complexity. Composition is skewed to polar residues over residues 472 to 502 (SQEQ…QHGG), 522 to 532 (QQAVSYTQQQP), 546 to 565 (GGTS…NWGS), and 575 to 591 (PFTQ…NGSG). Residues 674 to 702 (FRPWKPCFIYQQQGWCPYGENCKFMHDLR) form a C3H1-type zinc finger.

This Oryza sativa subsp. japonica (Rice) protein is Zinc finger CCCH domain-containing protein 62.